A 162-amino-acid chain; its full sequence is Phenazine biosynthesis protein PhzA1 (162 aa).

The protein belongs to the PhzA/PhzB family.

Its pathway is antibiotic biosynthesis; phenazine biosynthesis. Its function is as follows. Involved in the biosynthesis of the antibiotic phenazine, a nitrogen-containing heterocyclic molecule. PhzA1 (operon phzA1B1C1E1F1G1) has a role in the biosynthesis of the phenazine during planktonic growth. This chain is Phenazine biosynthesis protein PhzA1, found in Pseudomonas aeruginosa (strain ATCC 15692 / DSM 22644 / CIP 104116 / JCM 14847 / LMG 12228 / 1C / PRS 101 / PAO1).